The primary structure comprises 348 residues: Holliday junction branch migration complex subunit RuvB (348 aa).

Positions 4–184 (ADRLIAASGR…FGIVQRLEFY (181 aa)) are large ATPase domain (RuvB-L). ATP contacts are provided by residues isoleucine 23, arginine 24, glycine 65, lysine 68, threonine 69, threonine 70, 131-133 (EDF), arginine 174, tyrosine 184, and arginine 221. Residue threonine 69 coordinates Mg(2+). Residues 185 to 255 (NDKDLSTIVS…VADMALNLLD (71 aa)) are small ATPAse domain (RuvB-S). The head domain (RuvB-H) stretch occupies residues 258–348 (ERGFDHSDRR…GGDFSGPGDE (91 aa)). 3 residues coordinate DNA: arginine 294, arginine 313, and arginine 318.

Belongs to the RuvB family. In terms of assembly, homohexamer. Forms an RuvA(8)-RuvB(12)-Holliday junction (HJ) complex. HJ DNA is sandwiched between 2 RuvA tetramers; dsDNA enters through RuvA and exits via RuvB. An RuvB hexamer assembles on each DNA strand where it exits the tetramer. Each RuvB hexamer is contacted by two RuvA subunits (via domain III) on 2 adjacent RuvB subunits; this complex drives branch migration. In the full resolvosome a probable DNA-RuvA(4)-RuvB(12)-RuvC(2) complex forms which resolves the HJ.

Its subcellular location is the cytoplasm. The enzyme catalyses ATP + H2O = ADP + phosphate + H(+). The RuvA-RuvB-RuvC complex processes Holliday junction (HJ) DNA during genetic recombination and DNA repair, while the RuvA-RuvB complex plays an important role in the rescue of blocked DNA replication forks via replication fork reversal (RFR). RuvA specifically binds to HJ cruciform DNA, conferring on it an open structure. The RuvB hexamer acts as an ATP-dependent pump, pulling dsDNA into and through the RuvAB complex. RuvB forms 2 homohexamers on either side of HJ DNA bound by 1 or 2 RuvA tetramers; 4 subunits per hexamer contact DNA at a time. Coordinated motions by a converter formed by DNA-disengaged RuvB subunits stimulates ATP hydrolysis and nucleotide exchange. Immobilization of the converter enables RuvB to convert the ATP-contained energy into a lever motion, pulling 2 nucleotides of DNA out of the RuvA tetramer per ATP hydrolyzed, thus driving DNA branch migration. The RuvB motors rotate together with the DNA substrate, which together with the progressing nucleotide cycle form the mechanistic basis for DNA recombination by continuous HJ branch migration. Branch migration allows RuvC to scan DNA until it finds its consensus sequence, where it cleaves and resolves cruciform DNA. The chain is Holliday junction branch migration complex subunit RuvB from Pseudomonas putida (strain ATCC 700007 / DSM 6899 / JCM 31910 / BCRC 17059 / LMG 24140 / F1).